A 428-amino-acid polypeptide reads, in one-letter code: Dihydroorotase (428 aa).

The Zn(2+) site is built by H59 and H61. Residues 61 to 63 (HFR) and N93 contribute to the substrate site. Residues D151, H178, and H231 each contribute to the Zn(2+) site. Substrate is bound at residue N277. D304 contacts Zn(2+). D304 is a catalytic residue. Residues H308 and 322–323 (FG) each bind substrate.

Belongs to the metallo-dependent hydrolases superfamily. DHOase family. Class I DHOase subfamily. Zn(2+) serves as cofactor.

It carries out the reaction (S)-dihydroorotate + H2O = N-carbamoyl-L-aspartate + H(+). Its pathway is pyrimidine metabolism; UMP biosynthesis via de novo pathway; (S)-dihydroorotate from bicarbonate: step 3/3. In terms of biological role, catalyzes the reversible cyclization of carbamoyl aspartate to dihydroorotate. This Bacillus licheniformis (strain ATCC 14580 / DSM 13 / JCM 2505 / CCUG 7422 / NBRC 12200 / NCIMB 9375 / NCTC 10341 / NRRL NRS-1264 / Gibson 46) protein is Dihydroorotase.